The following is a 244-amino-acid chain: tRNA (guanine-N(1)-)-methyltransferase (244 aa).

S-adenosyl-L-methionine contacts are provided by residues Gly-113 and 132–137 (IGDYVL).

It belongs to the RNA methyltransferase TrmD family. In terms of assembly, homodimer.

The protein localises to the cytoplasm. It catalyses the reaction guanosine(37) in tRNA + S-adenosyl-L-methionine = N(1)-methylguanosine(37) in tRNA + S-adenosyl-L-homocysteine + H(+). Specifically methylates guanosine-37 in various tRNAs. This is tRNA (guanine-N(1)-)-methyltransferase from Shouchella clausii (strain KSM-K16) (Alkalihalobacillus clausii).